The following is a 106-amino-acid chain: Large ribosomal subunit protein eL30 (106 aa).

Belongs to the eukaryotic ribosomal protein eL30 family.

The polypeptide is Large ribosomal subunit protein eL30 (Methanococcus maripaludis (strain C7 / ATCC BAA-1331)).